The following is a 396-amino-acid chain: Potassium channel subfamily K member 9 (396 aa).

At 1–8 (MKRQNVRT) the chain is on the cytoplasmic side. The helical transmembrane segment at 9–29 (LSLIACTFTYLLVGAAVFDAL) threads the bilayer. Residues 30–88 (ESDHEMREEEKLKAEEVRLRGKYNISSDDYQQLELVILQSEPHRAGVQWKFAGSFYFAI) are Extracellular-facing. Asparagine 53 carries an N-linked (GlcNAc...) asparagine glycan. Positions 89-101 (TVITTIGYGHAAP) form an intramembrane region, pore-forming. K(+)-binding residues include threonine 93, isoleucine 94, glycine 95, and tyrosine 96. Residues 93 to 98 (TIGYGH) form a selectivity filter 1 region. Topologically, residues 102–107 (GTDAGK) are extracellular. Residues 108-128 (AFCMFYAVLGIPLTLVMFQSL) form a helical membrane-spanning segment. Topologically, residues 129-158 (GERMNTFVRYLLKRIKKCCGMRNTEVSMEN) are cytoplasmic. A helical transmembrane segment spans residues 159-179 (MVTVGFFSCMGTLCLGAAAFS). Over 180–194 (QCEDWSFFHAYYYCF) the chain is Extracellular. An intramembrane region (pore-forming) is located at residues 195-207 (ITLTTIGFGDFVA). K(+) is bound by residues threonine 199, isoleucine 200, glycine 201, and phenylalanine 202. The tract at residues 199 to 204 (TIGFGD) is selectivity filter 2. At 208 to 218 (LQSKGALQRKP) the chain is on the extracellular side. The helical transmembrane segment at 219–239 (FYVAFSFMYILVGLTVIGAFL) threads the bilayer. Residues 240–396 (NLVVLRFLTM…HRLHIRRKSI (157 aa)) lie on the Cytoplasmic side of the membrane. Residues 243-248 (VLRFLT) form an X-gate region.

Belongs to the two pore domain potassium channel (TC 1.A.1.8) family. In terms of assembly, homodimer. Heterodimer with KCNK1. Heterodimer with KCNK3. Highly expressed in the CNS and at lower levels in the colon, kidney, liver, lung, spleen, stomach and skeletal muscle. The highest expression was found in the olfactory nuclei, piriform cortex, cerebellum, antedorsal thalmic nucleus, pontine nucleus, dorsal raphe and several nuclei in the medulla. Shows a non-homogeneous distribution in the hippocampus. Expressed at highest levels in the lateral posterior and inferior portions and at medium levels in neocortex. Expressed in motoneurons, including hypoglossal motoneurons (at protein level).

The protein resides in the cell membrane. It is found in the mitochondrion inner membrane. The protein localises to the cell projection. Its subcellular location is the dendrite. The catalysed reaction is K(+)(in) = K(+)(out). It carries out the reaction Na(+)(in) = Na(+)(out). With respect to regulation, activated by halothane and isoflurane. Inhibited by external acidification, diacylglycerol, anandamide and AGT/angiotensin II. Ruthenium red inhibits homomeric but not KCNK3:KCNK9 heteromeric channels. In terms of biological role, k(+) channel that conducts voltage-dependent outward rectifying currents upon membrane depolarization. Voltage sensing is coupled to K(+) electrochemical gradient in an 'ion flux gating' mode where outward but not inward ion flow opens the gate. Changes ion selectivity and becomes permeable to Na(+) ions in response to extracellular acidification. Protonation of the pH sensor His-98 stabilizes C-type inactivation conformation likely converting the channel from outward K(+)-conducting, to inward Na(+)-conducting to nonconductive state. Homo- and heterodimerizes to form functional channels with distinct regulatory and gating properties. Allows K(+) currents with fast-gating kinetics important for the repolarization and hyperpolarization phases of action potentials. In granule neurons, hyperpolarizes the resting membrane potential to limit intrinsic neuronal excitability, but once the action potential threshold is reached, supports high-frequency action potential firing and increased neuronal excitability. Homomeric and/or heteromeric KCNK3:KCNK9 channels operate in cerebellar granule cells, whereas heteromeric KCNK1:KCNK9 enables currents in hippocampal dentate gyrus granule neurons. Dispensable for central chemosensory respiration i.e. breathing controlled by brainstem CO2/pH, it rather conducts pH-sensitive currents and controls the firing rate of serotonergic raphe neurons involved in potentiation of the respiratory chemoreflex. In retinal ganglion cells, mediates outward rectifying currents that regulate action potentials in response to acidification of the synaptic cleft. Involved in transmission of image-forming and nonimage-forming visual information in the retina. In adrenal gland, contributes to the maintenance of a hyperpolarized resting membrane potential of aldosterone-producing cells at zona glomerulosa and limits aldosterone release as part of a regulatory mechanism that controls arterial blood pressure and electrolyte homeostasis. The sequence is that of Potassium channel subfamily K member 9 from Rattus norvegicus (Rat).